The following is a 56-amino-acid chain: Large ribosomal subunit protein bL32 (56 aa).

Basic residues predominate over residues 1-16 (MAVQKSKKSRSMRGMR). A disordered region spans residues 1-22 (MAVQKSKKSRSMRGMRRSHDAL).

Belongs to the bacterial ribosomal protein bL32 family.

In Aliivibrio salmonicida (strain LFI1238) (Vibrio salmonicida (strain LFI1238)), this protein is Large ribosomal subunit protein bL32.